We begin with the raw amino-acid sequence, 218 residues long: MSSGAASGTGRGRPRGGGPGPRDPPPGETHKLVVVGGGGVGKSALTIQFIQSYFVSDYDPTIEDSYTKICTVDGIPARLDILDTAGQEEFGAMREQYMRAGNGFLLVFAINDRQSFIEVSKLFTQILRVKDRDDFPIVLVGNKADLETQRQVLRSEASSFSASHHMTYFEASAKLRLNVDEAFEQLVRTVRKYQEQELPPSPPSAPRKKDGRCPCVLL.

Positions 1–30 are disordered; that stretch reads MSSGAASGTGRGRPRGGGPGPRDPPPGETH. Residues 7-20 show a composition bias toward gly residues; that stretch reads SGTGRGRPRGGGPG. 36–44 contributes to the GTP binding site; it reads GGGGVGKSA. Residues 58 to 66 carry the Effector region motif; the sequence is YDPTIEDSY. GTP is bound by residues 83 to 87, 142 to 145, and 172 to 174; these read DTAGQ, NKAD, and SAK. Position 215 is a cysteine methyl ester (cysteine 215). Cysteine 215 carries S-geranylgeranyl cysteine lipidation. A propeptide spans 216 to 218 (removed in mature form); the sequence is VLL.

It belongs to the small GTPase superfamily. Ras family. As to quaternary structure, interacts with PLCE1. Interacts (active GTP-bound form preferentially) with RGS14. Interacts with OSBPL3. Interacts with ZDHHC19. Post-translationally, S-palmitoylated by ZDHHC19, leading to increased association with membranes and with rafts/caveolae as well as enhanced cell viability.

It localises to the cell membrane. It carries out the reaction GTP + H2O = GDP + phosphate + H(+). GTP-binding protein with GTPase activity, likely involved in the regulation of MAPK signaling pathway and thereby controlling multiple cellular processes. Regulates the organization of the actin cytoskeleton. With OSPBL3, modulates integrin beta-1 (ITGB1) activity. The polypeptide is Ras-related protein R-Ras (Rras) (Rattus norvegicus (Rat)).